We begin with the raw amino-acid sequence, 177 residues long: Interleukin-1 receptor antagonist protein (177 aa).

A signal peptide spans 1–25; it reads MEVCRCHHGYLISLLLFLFHSETAC. Cysteines 91 and 141 form a disulfide. Residues Asn-109 and Asn-114 are each glycosylated (N-linked (GlcNAc...) asparagine).

The protein belongs to the IL-1 family.

The protein resides in the secreted. Its function is as follows. Anti-inflammatory antagonist of interleukin-1 family of proinflammatory cytokines such as interleukin-1beta/IL1B and interleukin-1alpha/IL1A. Protects from immune dysregulation and uncontrolled systemic inflammation triggered by IL1 for a range of innate stimulatory agents such as pathogens. The protein is Interleukin-1 receptor antagonist protein (IL1RN) of Tursiops truncatus (Atlantic bottle-nosed dolphin).